The chain runs to 149 residues: Large ribosomal subunit protein uL13 (149 aa).

Belongs to the universal ribosomal protein uL13 family. As to quaternary structure, part of the 50S ribosomal subunit.

Its function is as follows. This protein is one of the early assembly proteins of the 50S ribosomal subunit, although it is not seen to bind rRNA by itself. It is important during the early stages of 50S assembly. This chain is Large ribosomal subunit protein uL13, found in Thermobifida fusca (strain YX).